Reading from the N-terminus, the 373-residue chain is Putative citrate synthase 2 (373 aa).

Active-site residues include histidine 250 and glutamate 303.

Belongs to the citrate synthase family.

The catalysed reaction is oxaloacetate + acetyl-CoA + H2O = citrate + CoA + H(+). The protein operates within carbohydrate metabolism; tricarboxylic acid cycle; isocitrate from oxaloacetate: step 1/2. In Mycobacterium bovis (strain ATCC BAA-935 / AF2122/97), this protein is Putative citrate synthase 2 (citA).